The sequence spans 633 residues: Telomere-binding protein 1 (633 aa).

The interval 253 to 272 (HAADRDDDENSSGCVHPSTS) is disordered. Residues 263–272 (SSGCVHPSTS) show a composition bias toward polar residues. Residues 351 to 430 (VKLTIKSFNI…LNDIGFTLEC (80 aa)) enclose the Ubiquitin-like domain. The tract at residues 506 to 615 (PFADPNSLAL…RVLAAQAYWS (110 aa)) is sufficient for telomeric DNA binding. In terms of domain architecture, HTH myb-type spans 529–588 (GQRRIRRPFTVAEVELLVEAVEHLGTGRWRDVKFRAFENVHHRTYVDLKDKWKTLVHTAS). In terms of domain architecture, SANT spans 534-584 (RRPFTVAEVELLVEAVEHLGTGRWRDVKFRAFENVHHRTYVDLKDKWKTLV). Positions 557–584 (WRDVKFRAFENVHHRTYVDLKDKWKTLV) form a DNA-binding region, H-T-H motif.

Homodimer. In terms of tissue distribution, ubiquitous.

It is found in the chromosome. Its subcellular location is the telomere. Functionally, binds the telomeric double-stranded 5'TTTAGGG-3' repeat and regulates telomere length and structure. The sequence is that of Telomere-binding protein 1 (TBP1) from Oryza sativa subsp. japonica (Rice).